The chain runs to 93 residues: Small ribosomal subunit protein bS20 (93 aa).

This sequence belongs to the bacterial ribosomal protein bS20 family.

Functionally, binds directly to 16S ribosomal RNA. The protein is Small ribosomal subunit protein bS20 of Dictyoglomus thermophilum (strain ATCC 35947 / DSM 3960 / H-6-12).